We begin with the raw amino-acid sequence, 431 residues long: Nocturnin (431 aa).

The N-terminal 75 residues, 1–75 (MFHSPRRLCS…SMGTGTSRLY (75 aa)), are a transit peptide targeting the mitochondrion. Low complexity predominate over residues 20–31 (LRRLPAPGLRRP). A disordered region spans residues 20 to 41 (LRRLPAPGLRRPLSPPAAVPRP). The segment covering 32–41 (LSPPAAVPRP) has biased composition (pro residues). E195 is a Mg(2+) binding site. Substrate-binding positions include E195, 219-221 (KPW), N263, 286-289 (HLKA), and 324-326 (DFN). The segment at 343–353 (NLNSAYKLLSA) is interaction with PPARG. Residue H414 participates in substrate binding.

Belongs to the CCR4/nocturin family. In terms of assembly, interacts with PPARG. Mg(2+) is required as a cofactor. As to expression, adipose tissue. Expression is higher in subcutaneous adipose tissue as compared to visceral adipose tissue.

The protein localises to the cytoplasm. It is found in the nucleus. It localises to the perinuclear region. The protein resides in the mitochondrion. The enzyme catalyses NADP(+) + H2O = phosphate + NAD(+). It catalyses the reaction NADPH + H2O = phosphate + NADH. Its function is as follows. Phosphatase which catalyzes the conversion of NADP(+) to NAD(+) and of NADPH to NADH. Shows a small preference for NADPH over NADP(+). Represses translation and promotes degradation of target mRNA molecules. Plays an important role in post-transcriptional regulation of metabolic genes under circadian control. Exerts a rhythmic post-transcriptional control of genes necessary for metabolic functions including nutrient absorption, glucose/insulin sensitivity, lipid metabolism, adipogenesis, inflammation and osteogenesis. Plays an important role in favoring adipogenesis over osteoblastogenesis and acts as a key regulator of the adipogenesis/osteogenesis balance. Promotes adipogenesis by facilitating PPARG nuclear translocation which activates its transcriptional activity. Regulates circadian expression of NOS2 in the liver and negatively regulates the circadian expression of IGF1 in the bone. Critical for proper development of early embryos. The chain is Nocturnin from Homo sapiens (Human).